An 839-amino-acid polypeptide reads, in one-letter code: AMP deaminase (839 aa).

Residues 8-28 (LALAALFGASFVAVSGFFMHF) form a helical membrane-spanning segment. A disordered region spans residues 40–167 (ERKENPDGDE…DDDDNLTNSE (128 aa)). Positions 85–94 (DGGGGGGGDT) are enriched in gly residues. Phosphoserine occurs at positions 134 and 140. Positions 153-162 (SVEESDDDDN) are enriched in acidic residues. Residue serine 203 is modified to Phosphoserine. Residue 289-296 (AHYPQGKS) participates in ATP binding. Residues histidine 391 and histidine 393 each contribute to the Zn(2+) site. Residues histidine 393 and 462 to 467 (KFNLKY) contribute to the substrate site. Position 659 (histidine 659) interacts with Zn(2+). Glutamate 662 is a binding site for substrate. The active-site Proton acceptor is the histidine 681. Residue aspartate 736 participates in Zn(2+) binding. Residue 737–740 (DPLQ) coordinates substrate.

Belongs to the metallo-dependent hydrolases superfamily. Adenosine and AMP deaminases family. As to quaternary structure, homodimer. Interacts with AHK4. Interacts with EER5. Zn(2+) is required as a cofactor. Expressed in seedlings, roots, leaves, flowers, pollen grains, pollen tubes and siliques, and at a lower level in stems.

The protein resides in the membrane. Its subcellular location is the microsome membrane. The enzyme catalyses AMP + H2O + H(+) = IMP + NH4(+). It participates in purine metabolism; IMP biosynthesis via salvage pathway; IMP from AMP: step 1/1. With respect to regulation, activated by ATP. Activated by sulfate ions (in vitro). Inhibited by phosphate ions. Its function is as follows. AMP deaminase plays a critical role in energy metabolism. Essential for the transition from zygote to embryo. The chain is AMP deaminase from Arabidopsis thaliana (Mouse-ear cress).